Reading from the N-terminus, the 338-residue chain is 1-aminocyclopropane-1-carboxylate deaminase (338 aa).

The residue at position 51 (Lys51) is an N6-(pyridoxal phosphate)lysine. Ser78 (nucleophile) is an active-site residue.

The protein belongs to the ACC deaminase/D-cysteine desulfhydrase family. In terms of assembly, homotrimer. Pyridoxal 5'-phosphate serves as cofactor.

The enzyme catalyses 1-aminocyclopropane-1-carboxylate + H2O = 2-oxobutanoate + NH4(+). Catalyzes a cyclopropane ring-opening reaction, the irreversible conversion of 1-aminocyclopropane-1-carboxylate (ACC) to ammonia and alpha-ketobutyrate. Allows growth on ACC as a nitrogen source. This Burkholderia multivorans (strain ATCC 17616 / 249) protein is 1-aminocyclopropane-1-carboxylate deaminase.